Consider the following 337-residue polypeptide: DNA-directed RNA polymerase subunit alpha (337 aa).

Positions 1 to 231 are alpha N-terminal domain (alpha-NTD); it reads MRNITISAYT…KQLSVFDKIT (231 aa). Residues 248–337 form an alpha C-terminal domain (alpha-CTD) region; the sequence is NTKLLQNITD…IAELKAQNEG (90 aa).

This sequence belongs to the RNA polymerase alpha chain family. In terms of assembly, homodimer. The RNAP catalytic core consists of 2 alpha, 1 beta, 1 beta' and 1 omega subunit. When a sigma factor is associated with the core the holoenzyme is formed, which can initiate transcription.

It catalyses the reaction RNA(n) + a ribonucleoside 5'-triphosphate = RNA(n+1) + diphosphate. Functionally, DNA-dependent RNA polymerase catalyzes the transcription of DNA into RNA using the four ribonucleoside triphosphates as substrates. The sequence is that of DNA-directed RNA polymerase subunit alpha from Campylobacter jejuni subsp. doylei (strain ATCC BAA-1458 / RM4099 / 269.97).